The chain runs to 336 residues: uncharacterized protein (336 aa).

This is an uncharacterized protein from Mycoplasma capricolum subsp. capricolum (strain California kid / ATCC 27343 / NCTC 10154).